A 583-amino-acid chain; its full sequence is Pescadillo (583 aa).

A coiled-coil region spans residues 275-329 (EKLSALSASLARMVASVEEEEAELDHFPTEGEDQEKMEVREKMEQQQSKQKKLFE). One can recognise a BRCT domain in the interval 323–416 (KQKKLFEGLK…IQLPVEEYFL (94 aa)). Disordered stretches follow at residues 448-526 (RGEK…EEKA) and 558-583 (ANKLAAKRKAHDDASKADKKKKKKKC). Acidic residues predominate over residues 455–489 (EEDEEEEGEEEEDDEEDEEDDEQSEDEEEAEEEAN). Over residues 512-526 (AKAENRARAAEEEKA) the composition is skewed to basic and acidic residues.

This sequence belongs to the pescadillo family. As to quaternary structure, component of the PeBoW complex, composed of bop1, pes1 and wdr12. The complex is held together by bop1, which interacts with pes1 via its N-terminal domain and with wdr12 via a high-affinity interaction between the seven-bladed beta-propeller domains of the 2 proteins. The PeBoW complex associates with the 66S pre-ribosome.

Its subcellular location is the nucleus. It is found in the nucleolus. It localises to the nucleoplasm. Its function is as follows. Component of the PeBoW complex, which is required for maturation of 28S and 5.8S ribosomal RNAs and formation of the 60S ribosome. In Danio rerio (Zebrafish), this protein is Pescadillo (pes).